Here is a 235-residue protein sequence, read N- to C-terminus: 2-C-methyl-D-erythritol 4-phosphate cytidylyltransferase (235 aa).

Belongs to the IspD/TarI cytidylyltransferase family. IspD subfamily. Homodimer.

It carries out the reaction 2-C-methyl-D-erythritol 4-phosphate + CTP + H(+) = 4-CDP-2-C-methyl-D-erythritol + diphosphate. It functions in the pathway isoprenoid biosynthesis; isopentenyl diphosphate biosynthesis via DXP pathway; isopentenyl diphosphate from 1-deoxy-D-xylulose 5-phosphate: step 2/6. Its function is as follows. Catalyzes the formation of 4-diphosphocytidyl-2-C-methyl-D-erythritol from CTP and 2-C-methyl-D-erythritol 4-phosphate (MEP). The protein is 2-C-methyl-D-erythritol 4-phosphate cytidylyltransferase of Serratia proteamaculans (strain 568).